The chain runs to 333 residues: MKRLISGIQPTNNLTLGNYLGAIKNFVDLQDDYEVFLFVADLHSLTPNIFDNTDFSTTKRQIIATYLAAGIDPKKTCLFYQSDILSIPLLAHILLCSTSIGELTRMTQFKDKSIKATKMANNTEMIPSGLLTYPTLMAADILTFNADVVPVGQDQKQHLELTRTLADRFNKRYGNTFKLPQVYIPKIGAKIMDLLDPNIKMSKSSKNLKGVIFLNDSKDIIFKKIKGALTDNLNKVKYDLTLQPGVSNLMTIYACLTNLSFKEIELKYQQQNYGVFKNDLANIVADFLEKLQQKISYWLNSPELDIMIDNSCERANDIAYQNVQLVLKHMQLK.

ATP is bound by residues 9–11 (QPT) and 17–18 (GN). The 'HIGH' region motif lies at 10–18 (PTNNLTLGN). Asp140 provides a ligand contact to L-tryptophan. Residues 152-154 (GQD), Ile191, and 200-204 (KMSKS) contribute to the ATP site. The 'KMSKS' region signature appears at 200–204 (KMSKS).

Belongs to the class-I aminoacyl-tRNA synthetase family. In terms of assembly, homodimer.

Its subcellular location is the cytoplasm. The catalysed reaction is tRNA(Trp) + L-tryptophan + ATP = L-tryptophyl-tRNA(Trp) + AMP + diphosphate + H(+). Catalyzes the attachment of tryptophan to tRNA(Trp). This is Tryptophan--tRNA ligase from Ureaplasma parvum serovar 3 (strain ATCC 700970).